The primary structure comprises 491 residues: Anthranilate synthase component 1 (491 aa).

L-tryptophan-binding positions include Ser-49 and 271 to 273; that span reads PYL. 306–307 is a binding site for chorismate; the sequence is GT. Glu-333 is a Mg(2+) binding site. Chorismate contacts are provided by residues Tyr-421, Arg-441, 455–457, and Gly-457; that span reads GAG. Glu-470 is a Mg(2+) binding site.

This sequence belongs to the anthranilate synthase component I family. In terms of assembly, heterotetramer consisting of two non-identical subunits: a beta subunit (TrpG) and a large alpha subunit (TrpE). It depends on Mg(2+) as a cofactor.

The enzyme catalyses chorismate + L-glutamine = anthranilate + pyruvate + L-glutamate + H(+). Its pathway is amino-acid biosynthesis; L-tryptophan biosynthesis; L-tryptophan from chorismate: step 1/5. Feedback inhibited by tryptophan. In terms of biological role, part of a heterotetrameric complex that catalyzes the two-step biosynthesis of anthranilate, an intermediate in the biosynthesis of L-tryptophan. In the first step, the glutamine-binding beta subunit (TrpG) of anthranilate synthase (AS) provides the glutamine amidotransferase activity which generates ammonia as a substrate that, along with chorismate, is used in the second step, catalyzed by the large alpha subunit of AS (TrpE) to produce anthranilate. In the absence of TrpG, TrpE can synthesize anthranilate directly from chorismate and high concentrations of ammonia. This chain is Anthranilate synthase component 1 (trpE), found in Neisseria meningitidis serogroup C / serotype 2a (strain ATCC 700532 / DSM 15464 / FAM18).